The chain runs to 108 residues: UPF0145 protein Ava_0420 (108 aa).

It belongs to the UPF0145 family.

This chain is UPF0145 protein Ava_0420, found in Trichormus variabilis (strain ATCC 29413 / PCC 7937) (Anabaena variabilis).